The sequence spans 133 residues: Salivary cystatin-L (133 aa).

The signal sequence occupies residues 1 to 19 (MTSSFALVLLLGGVAVCVA). The region spanning 30-117 (ANHQANPEFL…HRTCTTVVFE (88 aa)) is the Cystatin domain. Intrachain disulfides connect Cys-89–Cys-100 and Cys-111–Cys-130.

Belongs to the cystatin family. As to quaternary structure, monomer. Can form homodimers in vitro, but probably not in vivo. Homodimers are predicted to be inactive; dimerization disrupts the interaction with target proteases.

The protein localises to the secreted. Functionally, inhibitor of cysteine proteinases. Inhibits host immune responses via its inhibition of host cathepsins. Contributes to the suppression of the host's immune response to tick salivary proteins and is important for successful feeding on hosts. Inhibits differentiation of host dendritic cells. Inhibits proliferation of host T-cells in response to antigen stimulus. Down-regulates TLR2-mediated host responses to infection by B.burgdorferi and the production of the chemokine CCL3 by host dendritic cells. Down-regulates host responses to infection by B.burgdorferi and the production of IFNB1 by host dendritic cells. Down-regulates IL1B production by host mast cells, and this then leads to impaired activation of IL1R1, resulting in decreased IL9 production. Inhibits host inflammatory reactions and recruitment of host neutrophils. Inhibits papain and cathepsin L (CTSL) (in vitro). Inhibits cathepsin S (CTSS) (in vitro). Inhibits CTSV and CTSC, but to a lesser degree (in vitro). This chain is Salivary cystatin-L, found in Ixodes scapularis (Black-legged tick).